The sequence spans 726 residues: Catalase-peroxidase (726 aa).

The segment at 1–33 (MSTSDDIHNTTATGKCPFHQGGHDQSAGAGTTT) is disordered. A cross-link (tryptophyl-tyrosyl-methioninium (Trp-Tyr) (with M-252)) is located at residues 105–226 (WHGAGTYRSI…LGATEMGLIY (122 aa)). H106 (proton acceptor) is an active-site residue. The segment at residues 226-252 (YVNPEGPDHSGEPLSAAAAIRATFGNM) is a cross-link (tryptophyl-tyrosyl-methioninium (Tyr-Met) (with W-105)). Residue H267 coordinates heme b.

The protein belongs to the peroxidase family. Peroxidase/catalase subfamily. In terms of assembly, homodimer or homotetramer. Heme b is required as a cofactor. Post-translationally, formation of the three residue Trp-Tyr-Met cross-link is important for the catalase, but not the peroxidase activity of the enzyme.

It catalyses the reaction H2O2 + AH2 = A + 2 H2O. The catalysed reaction is 2 H2O2 = O2 + 2 H2O. Functionally, bifunctional enzyme with both catalase and broad-spectrum peroxidase activity. In Shigella boydii serotype 18 (strain CDC 3083-94 / BS512), this protein is Catalase-peroxidase.